We begin with the raw amino-acid sequence, 200 residues long: Regulator of G-protein signaling 16 (200 aa).

S-palmitoyl cysteine attachment occurs at residues C2 and C12. An RGS domain is found at 65 to 181 (SFDLLLSSKN…LKSPAYRDLA (117 aa)). Phosphotyrosine occurs at positions 168 and 177.

In terms of assembly, interacts with GNAI1 and GNAQ. Interacts with GNAI3, GNAI3 and GNAO1. (Microbial infection) Interacts with porcine circovirus 2 ORF3 protein. In terms of processing, palmitoylated on Cys-2 and/or Cys-12. Phosphorylated. Phosphorylation at Tyr-168 by EGFR enhances GTPase accelerating (GAP) activity toward GNAI1.

Its subcellular location is the membrane. Regulates G protein-coupled receptor signaling cascades. Inhibits signal transduction by increasing the GTPase activity of G protein alpha subunits, thereby driving them into their inactive GDP-bound form. Plays an important role in the phototransduction cascade by regulating the lifetime and effective concentration of activated transducin alpha. May regulate extra and intracellular mitogenic signals. In terms of biological role, (Microbial infection) Gets inactivated and/or degraded by porcine circovirus 2 ORF3 protein, leading to enhanced expression of IL-6 and IL-8 in infected lymphocytes. This would explain chronic inflammatory response of PCV2 infected pigs. The protein is Regulator of G-protein signaling 16 (RGS16) of Sus scrofa (Pig).